The following is a 158-amino-acid chain: Small ribosomal subunit protein uS7 (158 aa).

Belongs to the universal ribosomal protein uS7 family. In terms of assembly, part of the 30S ribosomal subunit. Contacts proteins S9 and S11.

Functionally, one of the primary rRNA binding proteins, it binds directly to 16S rRNA where it nucleates assembly of the head domain of the 30S subunit. Is located at the subunit interface close to the decoding center, probably blocks exit of the E-site tRNA. The chain is Small ribosomal subunit protein uS7 from Flavobacterium psychrophilum (strain ATCC 49511 / DSM 21280 / CIP 103535 / JIP02/86).